The sequence spans 700 residues: MAAAAVATPGATVLPPSVPSAAPGAKAPAAGAGKGPGNLLEITGEANIVNYMKNRLRKGAMKRKGLEMVNGHRFGVRFFKNPTYCGHCKDFIWGFGKQGFQCEECRFNIHQKCCKFVVFKCPGKDTDFDADCAKVKHGWISTTYTTPTFCDECGLLLHGVAHQGVKCENCNLNVHHACQETVPPMCGADISEVRGKLLLYVELKGNNLKVDIKEAANLIPMDTNGFSDPYIAVQMHPDRSGRTKKKTKTIQKNLNPVFNETFTFELQPQDRDKRLLIEVWDWDRTSRNDFMGSFSFSLEELQKEPVDGWYKFLSQVEGEHYNIPCVDAFNDIARLRDEVRHDRRPNEKRRMDNKDMPHNMSKRDMIRAADFNFVKVIGKGSFGKVLLAERRGTDELYAVKVLRKDVIIQTDDMELPMNEKKILALSGRPPFLVSMHSCFQTMDRLFFVMEYCKGGDLMYHMQQYGRFKESVAIFYAVEVAIALFFLHERDIIYRDLKLDNILLDGEGHVKLVDFGLSKEGVTERQTTRTFCGTPNYMAPEIVSYDPYSIAADWWSFGVLLFEFMAGQAPFEGDDETTVFRNIKDKKAVFPKHFSVEAMDIITSFLTKKPNNRLGAGRYARQEITTHPFFRNVDWDKAEACEMEPPIKPMIKHRKDISNFDDAFTKEKTDLTPTDKLFMMNLDQNDFIGFSFMNPEFITII.

2 consecutive Phorbol-ester/DAG-type zinc fingers follow at residues 71-121 (GHRF…VFKC) and 136-186 (KHGW…PPMC). Residues 189 to 310 (DISEVRGKLL…LQKEPVDGWY (122 aa)) enclose the C2 domain. Ca(2+) is bound by residues D222, D228, D281, D283, S286, and D289. One can recognise a Protein kinase domain in the interval 371–629 (FNFVKVIGKG…RQEITTHPFF (259 aa)). ATP contacts are provided by residues 377–385 (IGKGSFGKV) and K400. Residue D495 is the Proton acceptor of the active site. In terms of domain architecture, AGC-kinase C-terminal spans 630–700 (RNVDWDKAEA…FMNPEFITII (71 aa)).

The protein belongs to the protein kinase superfamily. AGC Ser/Thr protein kinase family. PKC subfamily. The cofactor is Ca(2+). As to expression, exclusively expressed in photoreceptor cells.

It catalyses the reaction L-seryl-[protein] + ATP = O-phospho-L-seryl-[protein] + ADP + H(+). The enzyme catalyses L-threonyl-[protein] + ATP = O-phospho-L-threonyl-[protein] + ADP + H(+). Its function is as follows. This is a calcium-activated, phospholipid-dependent, serine- and threonine-specific enzyme. This isozyme is a negative regulator of the visual transduction cascade and has been shown to be required for photoreceptor cell inactivation and light adaptation. Negative regulation is dependent on interaction with scaffolding protein inaD. Acts in a hh-signaling pathway which regulates the Duox-dependent gut immune response to bacterial uracil; required for the activation of Cad99C and consequently Cad99C-dependent endosome formation, which is essential for the Duox-dependent production of reactive oxygen species (ROS) in response to intestinal bacterial infection. The polypeptide is Protein kinase C, eye isozyme (inaC) (Drosophila melanogaster (Fruit fly)).